A 310-amino-acid chain; its full sequence is Ornithine carbamoyltransferase (310 aa).

Residues 56-59, Gln83, Arg107, and 134-137 contribute to the carbamoyl phosphate site; these read STRT and HPCQ. L-ornithine is bound by residues Asn165, Asp229, and 233-234; that span reads SM. Carbamoyl phosphate contacts are provided by residues 269–270 and Arg297; that span reads CL.

The protein belongs to the aspartate/ornithine carbamoyltransferase superfamily. OTCase family.

The protein localises to the cytoplasm. The enzyme catalyses carbamoyl phosphate + L-ornithine = L-citrulline + phosphate + H(+). The protein operates within amino-acid biosynthesis; L-arginine biosynthesis; L-arginine from L-ornithine and carbamoyl phosphate: step 1/3. Its function is as follows. Reversibly catalyzes the transfer of the carbamoyl group from carbamoyl phosphate (CP) to the N(epsilon) atom of ornithine (ORN) to produce L-citrulline. This is Ornithine carbamoyltransferase from Symbiobacterium thermophilum (strain DSM 24528 / JCM 14929 / IAM 14863 / T).